We begin with the raw amino-acid sequence, 426 residues long: MKVVVLGAGVIGVTTAWYLAKAGHEVVVLERQDGAALETSFANAGEISPGYASPWASPGVPRKAPKWLLARHAPLIVRPSLDPALLSWLLAMLRNCTTERYLANKARMVRLAEHSRDCLIALRRETGIQYDQRSRGTLQVFRTQAQMDEAGKDMEVLRDLGVPYELLDRLGCIAREPGLGHARDTIVGGLRLPNDETGDCFKFTTALADLCRGQGVDFRFGTTIQGLETAGGEVGGVRTPGGTVTGDAYVVCLGSYSEPFLRPHGIRTGVYPVKGYSLTATITDEAKAPVSTLLDETYKVAITRLGDRVRIGGLAELAGYDLSLRPSRRATLEHSAGSLFGGSCDLPSATFWCGLRPMTPTSTPRIGEAPLRRLFLNTGHGTLGWTMACGSAQVLADAVGRQAPALDLTDYAVPGSPAAEPLRRAA.

Position 3–17 (valine 3–tryptophan 17) interacts with FAD.

The protein belongs to the DadA oxidoreductase family. FAD is required as a cofactor.

The catalysed reaction is a D-alpha-amino acid + A + H2O = a 2-oxocarboxylate + AH2 + NH4(+). It participates in amino-acid degradation; D-alanine degradation; NH(3) and pyruvate from D-alanine: step 1/1. Functionally, oxidative deamination of D-amino acids. This Phenylobacterium zucineum (strain HLK1) protein is D-amino acid dehydrogenase.